The primary structure comprises 881 residues: Beta-mannosidase (881 aa).

A signal peptide spans 1-18 (MHLHLLFLLALCGAGCMA). N-linked (GlcNAc...) asparagine glycans are attached at residues N35, N77, N89, and N113. An intrachain disulfide couples C167 to C176. A substrate-binding site is contributed by 190–192 (WDW). N-linked (GlcNAc...) asparagine glycans are attached at residues N226, N297, and N302. N456 provides a ligand contact to substrate. Residue E457 is the Proton donor of the active site. Disulfide bonds link C540/C629, C732/C761, and C764/C769. The active-site Nucleophile is the E554. N-linked (GlcNAc...) asparagine glycosylation is present at N803.

Belongs to the glycosyl hydrolase 2 family. Monomer.

Its subcellular location is the lysosome. It catalyses the reaction Hydrolysis of terminal, non-reducing beta-D-mannose residues in beta-D-mannosides.. The protein operates within glycan metabolism; N-glycan degradation. Its function is as follows. Exoglycosidase that cleaves the single beta-linked mannose residue from the non-reducing end of all N-linked glycoprotein oligosaccharides. The polypeptide is Beta-mannosidase (Rattus norvegicus (Rat)).